Consider the following 100-residue polypeptide: MAKSSVKEREKKREQLIKRYEKKRKEIKQQIIEASTLKQKWQAYEKLSQLPKDSSPVRQRRRCWLTGRSRGVYRYFGLCRHMVRKMAHEGLLAGVTKSSW.

Belongs to the universal ribosomal protein uS14 family. Part of the 30S ribosomal subunit.

Its subcellular location is the plastid. The protein resides in the chloroplast. Its function is as follows. Binds 16S rRNA, required for the assembly of 30S particles. The polypeptide is Small ribosomal subunit protein uS14c (Cyanidioschyzon merolae (strain NIES-3377 / 10D) (Unicellular red alga)).